The sequence spans 300 residues: Glutamyl-Q tRNA(Asp) synthetase (300 aa).

Residues 8–12 (RFAPS) and Glu44 contribute to the L-glutamate site. A 'HIGH' region motif is present at residues 11-21 (PSPTGALHAGS). Residues Cys100, Cys102, Tyr126, and Cys130 each coordinate Zn(2+). Residues Tyr190 and Arg208 each contribute to the L-glutamate site. Residues 246–250 (KLSKQ) carry the 'KMSKS' region motif. Lys249 contributes to the ATP binding site.

This sequence belongs to the class-I aminoacyl-tRNA synthetase family. GluQ subfamily. Zn(2+) is required as a cofactor.

Catalyzes the tRNA-independent activation of glutamate in presence of ATP and the subsequent transfer of glutamate onto a tRNA(Asp). Glutamate is transferred on the 2-amino-5-(4,5-dihydroxy-2-cyclopenten-1-yl) moiety of the queuosine in the wobble position of the QUC anticodon. This Leptothrix cholodnii (strain ATCC 51168 / LMG 8142 / SP-6) (Leptothrix discophora (strain SP-6)) protein is Glutamyl-Q tRNA(Asp) synthetase.